Consider the following 107-residue polypeptide: DNA polymerase delta subunit 4 (107 aa).

The PCNA-interaction protein motif (PIP box) signature appears at 1 to 16 (MGRKRFITDSYPVVKK). The disordered stretch occupies residues 1-40 (MGRKRFITDSYPVVKKREGPPGHSKGELAPELGEDTQSLS). The segment covering 15-28 (KKREGPPGHSKGEL) has biased composition (basic and acidic residues).

This sequence belongs to the DNA polymerase delta subunit 4 family. As to quaternary structure, component of the tetrameric DNA polymerase delta complex (Pol-delta4), which consists of POLD1/p125, POLD2/p50, POLD3/p66/p68 and POLD4/p12, with POLD1 bearing DNA polymerase and 3' to 5' proofreading exonuclease activities. Within this complex, directly interacts with POLD1 and POLD2. Directly interacts with PCNA, as do POLD1 and POLD3; this interaction stimulates Pol-delta4 polymerase activity. As POLD1 and POLD2, directly interacts with WRNIP1; this interaction stimulates DNA polymerase delta-mediated DNA synthesis, independently of the presence of PCNA, possibly by increasing initiation frequency. Upon genotoxic stress induced by DNA damaging agents or by replication stress, POLD4 is proteolytically degraded and Pol-delta4 is converted into a trimeric form of the complex (Pol-delta3) that has an increased proofreading activity. The DNA polymerase delta complex interacts with POLDIP2; this interaction is probably mediated through direct binding to POLD2. In terms of processing, ubiquitinated; undergoes 'Lys-48'-linked polyubiquitination in response to UV irradiation or treatment with an alkylating agent, leading to proteasomal degradation. This modification is mediated, at least in part, by RNF8. Ubiquitinated; undergoes 'Lys-48'-linked ubiquitination in response to UV irradiation, leading to proteasomal degradation. This modification is partly mediated by RNF8 and by the DCX(DTL) E3 ubiquitin ligase complex (also called CRL4(CDT2)). Efficient degradation requires the presence of PCNA and is required for the inhibition of fork progression after DNA damage.

Its subcellular location is the nucleus. In terms of biological role, as a component of the tetrameric DNA polymerase delta complex (Pol-delta4), plays a role in high fidelity genome replication and repair. Within this complex, increases the rate of DNA synthesis and decreases fidelity by regulating POLD1 polymerase and proofreading 3' to 5' exonuclease activity. Pol-delta4 participates in Okazaki fragment processing, through both the short flap pathway, as well as a nick translation system. Under conditions of DNA replication stress, required for the repair of broken replication forks through break-induced replication (BIR), a mechanism that may induce segmental genomic duplications of up to 200 kb. Involved in Pol-delta4 translesion synthesis (TLS) of templates carrying O6-methylguanine or abasic sites. Its degradation in response to DNA damage is required for the inhibition of fork progression and cell survival. The chain is DNA polymerase delta subunit 4 (Pold4) from Mus musculus (Mouse).